The following is a 673-amino-acid chain: Poly(glycerol-phosphate) alpha-glucosyltransferase (673 aa).

The residue at position 2 (Ser-2) is a Phosphoserine.

Belongs to the glycosyltransferase group 1 family. Glycosyltransferase 4 subfamily.

It is found in the cytoplasm. It carries out the reaction 4-O-{[(2R)-1-glycerylphospho](n)-(2R)-1-glycerylphospho}-N-acetyl-beta-D-mannosaminyl-(1-&gt;4)-N-acetyl-alpha-D-glucosaminyl undecaprenyl diphosphate + n UDP-alpha-D-glucose = 4-O-{[(2R)-2-alpha-D-glucosyl-1-glycerylphospho](n)-(2R)-1-glycerylphospho}-N-acetyl-beta-D-mannosaminyl-(1-&gt;4)-N-acetyl-alpha-D-glucosaminyl undecaprenyl diphosphate + n UDP + n H(+). It functions in the pathway cell wall biogenesis; poly(glycerol phosphate) teichoic acid biosynthesis. Catalyzes the addition of glucose to the C-2 hydroxy group of the glycerol units in teichoic acid. The chain is Poly(glycerol-phosphate) alpha-glucosyltransferase (tagE) from Bacillus subtilis (strain 168).